Reading from the N-terminus, the 327-residue chain is Thioredoxin reductase (327 aa).

Residues 10 to 13, 39 to 40, glutamine 44, asparagine 53, valine 86, cysteine 143, aspartate 286, and 293 to 295 each bind FAD; these read SGPA, IA, and RQA. Cysteine 140 and cysteine 143 form a disulfide bridge.

It belongs to the class-II pyridine nucleotide-disulfide oxidoreductase family. As to quaternary structure, homodimer. Requires FAD as cofactor.

The protein resides in the cytoplasm. The enzyme catalyses [thioredoxin]-dithiol + NADP(+) = [thioredoxin]-disulfide + NADPH + H(+). Functionally, component of the thioredoxin-thioredoxin reductase system which may be involved in biosynthesis of penicillins and cephalosporins and may be important in determining the thiol-disulfide redox balance. In Pneumocystis jirovecii (Human pneumocystis pneumonia agent), this protein is Thioredoxin reductase (TRR1).